Here is a 251-residue protein sequence, read N- to C-terminus: MWIGVISLFPEMFRAITDYGVTGRAVKNGLLNVQCWSPRDFTHDRHRTVDDRPYGGGPGMLMMVQPLQDAIHEAKNKAGEGTKVIYLSPQGRKLDQQGVSELAANPKMILVCGRYEGIDERLIATEIDEEWSMGDYVLSGGELAAMALIDSVSRFIPGVLGHEASSAEDSFARGLLDCPHYTRPEVLAGMEVPSVLLSGNHAEIRRWRLKQSLGRTWLRRPELLESLALTDEQATLLNEFQREYRVRQHDD.

S-adenosyl-L-methionine is bound by residues glycine 113 and 133 to 138; that span reads MGDYVL.

It belongs to the RNA methyltransferase TrmD family. As to quaternary structure, homodimer.

The protein localises to the cytoplasm. It carries out the reaction guanosine(37) in tRNA + S-adenosyl-L-methionine = N(1)-methylguanosine(37) in tRNA + S-adenosyl-L-homocysteine + H(+). Functionally, specifically methylates guanosine-37 in various tRNAs. This is tRNA (guanine-N(1)-)-methyltransferase from Sodalis glossinidius (strain morsitans).